The chain runs to 109 residues: MSEFKRIPPEQAQALREQGAVVVDVRDPATFAALHISGSKHLDNHSLHAFIQGADLDAPTVVVCYHGNSSQGAAAYLVSQGFSDVYSMDGGFELWRTTFPSETAQGTSE.

The region spanning 16–104 is the Rhodanese domain; that stretch reads REQGAVVVDV…WRTTFPSETA (89 aa). Cysteine 64 functions as the Cysteine persulfide intermediate in the catalytic mechanism.

It belongs to the GlpE family.

It localises to the cytoplasm. The catalysed reaction is thiosulfate + hydrogen cyanide = thiocyanate + sulfite + 2 H(+). The enzyme catalyses thiosulfate + [thioredoxin]-dithiol = [thioredoxin]-disulfide + hydrogen sulfide + sulfite + 2 H(+). In terms of biological role, transferase that catalyzes the transfer of sulfur from thiosulfate to thiophilic acceptors such as cyanide or dithiols. May function in a CysM-independent thiosulfate assimilation pathway by catalyzing the conversion of thiosulfate to sulfite, which can then be used for L-cysteine biosynthesis. This is Thiosulfate sulfurtransferase GlpE from Pseudomonas fluorescens (strain Pf0-1).